Here is a 323-residue protein sequence, read N- to C-terminus: tRNA U34 carboxymethyltransferase (323 aa).

Carboxy-S-adenosyl-L-methionine is bound by residues Lys-91, Trp-105, Lys-110, Gly-130, 181–182 (IE), Met-196, Tyr-200, and Arg-315.

This sequence belongs to the class I-like SAM-binding methyltransferase superfamily. CmoB family. Homotetramer.

It carries out the reaction carboxy-S-adenosyl-L-methionine + 5-hydroxyuridine(34) in tRNA = 5-carboxymethoxyuridine(34) in tRNA + S-adenosyl-L-homocysteine + H(+). In terms of biological role, catalyzes carboxymethyl transfer from carboxy-S-adenosyl-L-methionine (Cx-SAM) to 5-hydroxyuridine (ho5U) to form 5-carboxymethoxyuridine (cmo5U) at position 34 in tRNAs. This chain is tRNA U34 carboxymethyltransferase, found in Yersinia pestis bv. Antiqua (strain Antiqua).